Here is a 500-residue protein sequence, read N- to C-terminus: Aspartyl/glutamyl-tRNA(Asn/Gln) amidotransferase subunit B (500 aa).

It belongs to the GatB/GatE family. GatB subfamily. As to quaternary structure, heterotrimer of A, B and C subunits.

It carries out the reaction L-glutamyl-tRNA(Gln) + L-glutamine + ATP + H2O = L-glutaminyl-tRNA(Gln) + L-glutamate + ADP + phosphate + H(+). The catalysed reaction is L-aspartyl-tRNA(Asn) + L-glutamine + ATP + H2O = L-asparaginyl-tRNA(Asn) + L-glutamate + ADP + phosphate + 2 H(+). Its function is as follows. Allows the formation of correctly charged Asn-tRNA(Asn) or Gln-tRNA(Gln) through the transamidation of misacylated Asp-tRNA(Asn) or Glu-tRNA(Gln) in organisms which lack either or both of asparaginyl-tRNA or glutaminyl-tRNA synthetases. The reaction takes place in the presence of glutamine and ATP through an activated phospho-Asp-tRNA(Asn) or phospho-Glu-tRNA(Gln). In Clavibacter sepedonicus (Clavibacter michiganensis subsp. sepedonicus), this protein is Aspartyl/glutamyl-tRNA(Asn/Gln) amidotransferase subunit B.